The chain runs to 95 residues: UPF0235 protein Pcar_0617 (95 aa).

This sequence belongs to the UPF0235 family.

The polypeptide is UPF0235 protein Pcar_0617 (Syntrophotalea carbinolica (strain DSM 2380 / NBRC 103641 / GraBd1) (Pelobacter carbinolicus)).